The primary structure comprises 40 residues: Photosystem II reaction center protein J (40 aa).

A helical membrane pass occupies residues 8–28 (IPLWVIGTVAGILVIGIIGIF).

Belongs to the PsbJ family. In terms of assembly, PSII is composed of 1 copy each of membrane proteins PsbA, PsbB, PsbC, PsbD, PsbE, PsbF, PsbH, PsbI, PsbJ, PsbK, PsbL, PsbM, PsbT, PsbX, PsbY, PsbZ, Psb30/Ycf12, at least 3 peripheral proteins of the oxygen-evolving complex and a large number of cofactors. It forms dimeric complexes.

It is found in the plastid. The protein localises to the chloroplast thylakoid membrane. In terms of biological role, one of the components of the core complex of photosystem II (PSII). PSII is a light-driven water:plastoquinone oxidoreductase that uses light energy to abstract electrons from H(2)O, generating O(2) and a proton gradient subsequently used for ATP formation. It consists of a core antenna complex that captures photons, and an electron transfer chain that converts photonic excitation into a charge separation. The chain is Photosystem II reaction center protein J from Lobularia maritima (Sweet alyssum).